Consider the following 284-residue polypeptide: Nucleotide-binding protein NMB0738 (284 aa).

Residue 8–15 (GLSGSGKS) coordinates ATP. 58–61 (DVRS) serves as a coordination point for GTP.

Belongs to the RapZ-like family.

Displays ATPase and GTPase activities. This chain is Nucleotide-binding protein NMB0738, found in Neisseria meningitidis serogroup B (strain ATCC BAA-335 / MC58).